The primary structure comprises 184 residues: ADP-ribosylation factor-like protein 2 (184 aa).

The N-myristoyl glycine moiety is linked to residue Gly2. Residues 23–30 (GLDNAGKT), 66–70 (DVGGQ), Gly68, and 125–128 (NKSD) contribute to the GTP site.

It belongs to the small GTPase superfamily. Arf family. As to expression, in the embryo, strongly expressed in migrating hypodermal cells. Shortly before the beginning of elongation, expressed in many developing neurons where it persists throughout adulthood. In the larva, highly expressed in migrating hypodermal cells and the uterus. Also expressed in vulva, spermatheca, sheath cells, distal tips cells and proctoderm of the male tail.

The protein resides in the cytoplasm. It is found in the cell membrane. It localises to the cytoskeleton. The protein localises to the microtubule organizing center. Its subcellular location is the centrosome. GTP-binding protein that functions in embryogenesis, cytokinesis, germline development and microtubulule cytoskeleton dynamics. This is ADP-ribosylation factor-like protein 2 (evl-20) from Caenorhabditis elegans.